Here is a 261-residue protein sequence, read N- to C-terminus: Glucosamine-6-phosphate deaminase (261 aa).

D67 acts as the Proton acceptor; for enolization step in catalysis. Catalysis depends on N135, which acts as the For ring-opening step. H137 (proton acceptor; for ring-opening step) is an active-site residue. E142 serves as the catalytic For ring-opening step.

It belongs to the glucosamine/galactosamine-6-phosphate isomerase family. NagB subfamily. Homohexamer.

The enzyme catalyses alpha-D-glucosamine 6-phosphate + H2O = beta-D-fructose 6-phosphate + NH4(+). It participates in amino-sugar metabolism; N-acetylneuraminate degradation; D-fructose 6-phosphate from N-acetylneuraminate: step 5/5. In terms of biological role, catalyzes the reversible isomerization-deamination of glucosamine 6-phosphate (GlcN6P) to form fructose 6-phosphate (Fru6P) and ammonium ion. The sequence is that of Glucosamine-6-phosphate deaminase from Hahella chejuensis (strain KCTC 2396).